Consider the following 859-residue polypeptide: Cadherin-related family member 1 (859 aa).

The signal sequence occupies residues 1-21; that stretch reads MRRGPQVALVLGLLCIYLAQA. Topologically, residues 22–701 are extracellular; that stretch reads NFAPHFFDNG…LIQTKDNPMK (680 aa). Cadherin domains are found at residues 36 to 135, 136 to 247, 248 to 354, 360 to 473, 474 to 577, and 569 to 691; these read NGNM…APRF, LQEP…APIF, VGTP…PPTF, PQNK…VPKF, TSHY…YPQF, and DVND…MAAF. 2 N-linked (GlcNAc...) asparagine glycosylation sites follow: N58 and N89. 2 N-linked (GlcNAc...) asparagine glycosylation sites follow: N288 and N297. Residues 702–722 form a helical membrane-spanning segment; that stretch reads AVGVLAGVMAIVVAITVLIST. At 723 to 859 the chain is on the cytoplasmic side; that stretch reads ATFWRNKKSN…KKSLGNKAYV (137 aa). Residues 789 to 859 form a disordered region; that stretch reads PPRAPALPPP…KKSLGNKAYV (71 aa). Over residues 790–800 the composition is skewed to pro residues; sequence PRAPALPPPPK. The span at 802–816 shows a compositional bias: polar residues; sequence ASSTVAQQTVPTVSG. Low complexity predominate over residues 817–827; sequence SLTPQPSQQLP.

In terms of assembly, interacts with PROM1. Post-translationally, undergoes proteolytic cleavage; produces a soluble 95 kDa N-terminal fragment and a 25 kDa cell-associated C-terminal fragment. In terms of tissue distribution, expressed in the retina. Strongly expressed by the mitral and tufted cells in the main and accessory olfactory bulbs. Also expressed in the septum and olfactory cortex. Weakly expressed in the triangular septal nucleus and piriform cortex.

The protein resides in the cell membrane. Its function is as follows. Potential calcium-dependent cell-adhesion protein. May be required for the structural integrity of the outer segment (OS) of photoreceptor cells. In Rattus norvegicus (Rat), this protein is Cadherin-related family member 1 (Cdhr1).